A 189-amino-acid chain; its full sequence is Testis-expressed protein 22 (189 aa).

Residues 1-120 are disordered; the sequence is MDSRQQRPQR…TQSVPTPPLQ (120 aa). Residues 14–24 are compositionally biased toward low complexity; sequence QWQLAQEQRQQ. Basic and acidic residues predominate over residues 70-87; the sequence is IDERRRLALQRMQERTDT. Low complexity predominate over residues 103-114; the sequence is QQTETSPSTQSV.

Mainly expressed in spermatocytes and spermatids in testis.

Its subcellular location is the cytoplasm. The protein resides in the cytoplasmic vesicle. The protein localises to the secretory vesicle. It localises to the acrosome. The chain is Testis-expressed protein 22 (Tex22) from Mus musculus (Mouse).